The chain runs to 109 residues: uncharacterized protein (109 aa).

2 consecutive transmembrane segments (helical) span residues 19–39 (LELVENYVICFFTVLCFCLIP) and 53–73 (YFIDFFFFHLSPSIPFWFYPF).

The protein localises to the membrane. This is an uncharacterized protein from Saccharomyces cerevisiae (strain ATCC 204508 / S288c) (Baker's yeast).